The chain runs to 148 residues: Troponin C (148 aa).

EF-hand domains follow at residues 8-43 (KQFN…LALH), 44-79 (VSDD…KVQE), 81-116 (EDER…LGDD), and 117-148 (LNDD…LMLG). Positions 130, 132, 134, 136, and 141 each coordinate Ca(2+).

It belongs to the troponin C family.

In terms of biological role, troponin is the central regulatory protein of striated muscle contraction. Tn consists of three components: Tn-I which is the inhibitor of actomyosin ATPase, Tn-T which contains the binding site for tropomyosin and Tn-C. The binding of calcium to Tn-C abolishes the inhibitory action of Tn on actin filaments. The sequence is that of Troponin C from Todarodes pacificus (Japanese flying squid).